The primary structure comprises 152 residues: Cytochrome c oxidase subunit 5A, mitochondrial (152 aa).

A mitochondrion-targeting transit peptide spans 1–43 (MLGTALRRCAVAAAAASRAGPRGLLHPAPAPGPAAAIQSIRCY). Positions 2 to 22 (LGTALRRCAVAAAAASRAGPR) match the SIFI-degron motif. N6-acetyllysine occurs at positions 89 and 115. T143 carries the phosphothreonine modification.

This sequence belongs to the cytochrome c oxidase subunit 5A family. Component of the cytochrome c oxidase (complex IV, CIV), a multisubunit enzyme composed of 14 subunits. The complex is composed of a catalytic core of 3 subunits MT-CO1, MT-CO2 and MT-CO3, encoded in the mitochondrial DNA, and 11 supernumerary subunits COX4I, COX5A, COX5B, COX6A, COX6B, COX6C, COX7A, COX7B, COX7C, COX8 and NDUFA4, which are encoded in the nuclear genome. The complex exists as a monomer or a dimer and forms supercomplexes (SCs) in the inner mitochondrial membrane with NADH-ubiquinone oxidoreductase (complex I, CI) and ubiquinol-cytochrome c oxidoreductase (cytochrome b-c1 complex, complex III, CIII), resulting in different assemblies (supercomplex SCI(1)III(2)IV(1) and megacomplex MCI(2)III(2)IV(2)). Interacts with AFG1L. Interacts with RAB5IF. Post-translationally, in response to mitochondrial stress, the precursor protein is ubiquitinated by the SIFI complex in the cytoplasm before mitochondrial import, leading to its degradation. Within the SIFI complex, UBR4 initiates ubiquitin chain that are further elongated or branched by KCMF1.

Its subcellular location is the mitochondrion inner membrane. It functions in the pathway energy metabolism; oxidative phosphorylation. Functionally, component of the cytochrome c oxidase, the last enzyme in the mitochondrial electron transport chain which drives oxidative phosphorylation. The respiratory chain contains 3 multisubunit complexes succinate dehydrogenase (complex II, CII), ubiquinol-cytochrome c oxidoreductase (cytochrome b-c1 complex, complex III, CIII) and cytochrome c oxidase (complex IV, CIV), that cooperate to transfer electrons derived from NADH and succinate to molecular oxygen, creating an electrochemical gradient over the inner membrane that drives transmembrane transport and the ATP synthase. Cytochrome c oxidase is the component of the respiratory chain that catalyzes the reduction of oxygen to water. Electrons originating from reduced cytochrome c in the intermembrane space (IMS) are transferred via the dinuclear copper A center (CU(A)) of subunit 2 and heme A of subunit 1 to the active site in subunit 1, a binuclear center (BNC) formed by heme A3 and copper B (CU(B)). The BNC reduces molecular oxygen to 2 water molecules using 4 electrons from cytochrome c in the IMS and 4 protons from the mitochondrial matrix. In Eulemur fulvus fulvus (Brown lemur), this protein is Cytochrome c oxidase subunit 5A, mitochondrial (COX5A).